Reading from the N-terminus, the 205-residue chain is GTP cyclohydrolase-2 (205 aa).

A GTP-binding site is contributed by 49 to 53 (RLHSE). Zn(2+)-binding residues include C54, C65, and C67. GTP contacts are provided by residues Q70, 92–94 (EGR), and T114. D126 serves as the catalytic Proton acceptor. The active-site Nucleophile is the R128. T149 and K154 together coordinate GTP.

The protein belongs to the GTP cyclohydrolase II family. It depends on Zn(2+) as a cofactor.

It carries out the reaction GTP + 4 H2O = 2,5-diamino-6-hydroxy-4-(5-phosphoribosylamino)-pyrimidine + formate + 2 phosphate + 3 H(+). It functions in the pathway cofactor biosynthesis; riboflavin biosynthesis; 5-amino-6-(D-ribitylamino)uracil from GTP: step 1/4. Catalyzes the conversion of GTP to 2,5-diamino-6-ribosylamino-4(3H)-pyrimidinone 5'-phosphate (DARP), formate and pyrophosphate. The chain is GTP cyclohydrolase-2 from Pseudomonas aeruginosa (strain UCBPP-PA14).